A 358-amino-acid chain; its full sequence is Ribosomal RNA large subunit methyltransferase M (358 aa).

Residues Ser-191, 224–227, Asp-243, Asp-263, and Asp-279 contribute to the S-adenosyl-L-methionine site; that span reads APGG. The Proton acceptor role is filled by Lys-308.

It belongs to the class I-like SAM-binding methyltransferase superfamily. RNA methyltransferase RlmE family. RlmM subfamily. Monomer.

It localises to the cytoplasm. It catalyses the reaction cytidine(2498) in 23S rRNA + S-adenosyl-L-methionine = 2'-O-methylcytidine(2498) in 23S rRNA + S-adenosyl-L-homocysteine + H(+). Functionally, catalyzes the 2'-O-methylation at nucleotide C2498 in 23S rRNA. This Marinobacter nauticus (strain ATCC 700491 / DSM 11845 / VT8) (Marinobacter aquaeolei) protein is Ribosomal RNA large subunit methyltransferase M.